Consider the following 1044-residue polypeptide: Elongation factor 3A (1044 aa).

Ser-2 bears the N-acetylserine mark. The stretch at 5–42 (QQSIKVLEELFQKLSVATADNRHEIASEVASFLNGNII) is one HEAT 1 repeat. Residues Ile-42, His-44, and Ser-83 each coordinate ADP. HEAT repeat units follow at residues 86 to 123 (PYIV…AVNP), 125 to 162 (AIKA…AAKD), 166 to 203 (LRMP…TVDN), 205 to 241 (DIER…EVTP), 242 to 279 (ATLS…LVED), and 285 to 323 (PFLG…VGNV). N6,N6,N6-trimethyllysine is present on residues Lys-187 and Lys-196. Lys-350 is covalently cross-linked (Glycyl lysine isopeptide (Lys-Gly) (interchain with G-Cter in ubiquitin)). ADP-binding residues include Thr-392, His-396, and Glu-397. An ABC transporter 1 domain is found at 426-641 (DEGEDLCNCE…CPAAKAYEEL (216 aa)). Residue Lys-636 forms a Glycyl lysine isopeptide (Lys-Gly) (interchain with G-Cter in ubiquitin) linkage. Residue Ser-642 is modified to Phosphoserine. Positions 667–993 (VKVTNMEFQY…AGPRIEKKED (327 aa)) constitute an ABC transporter 2 domain. Asn-703 lines the ADP pocket. Lys-789 carries the N6,N6,N6-trimethyllysine modification. ADP contacts are provided by Glu-922, Asn-925, and His-951. The residue at position 972 (Thr-972) is a Phosphothreonine. Ser-974 is modified (phosphoserine). Residues 974–1044 (SGHNWVSGQG…DAYVSSDEEF (71 aa)) form a disordered region. The span at 1007 to 1031 (GGKKKKKLSSAELRKKKKERMKKKK) shows a compositional bias: basic residues. A phosphoserine mark is found at Ser-1039 and Ser-1040.

The protein belongs to the ABC transporter superfamily. ABCF family. EF3 subfamily. In terms of assembly, monomer. Interacts with elongation factor 1A (eEF1A). Interacts through its N-terminus with 18S rRNA. Associates with ribosomes; preferentially binds ribosomes in the post-translocational state (bearing a peptidyl-tRNA in the P-site) in the presence of ATP, suggesting that ATP hydrolysis is required for ribosome dissociation.

The protein localises to the cytoplasm. It localises to the cytosol. The catalysed reaction is ATP + H2O = ADP + phosphate + H(+). It participates in protein biosynthesis; polypeptide chain elongation. Its activity is regulated as follows. Inhibited by the translational inhibitors neomycin and alpha-sarcin, which suppress the ATPase activity. In terms of biological role, ribosome-dependent ATPase that functions in cytoplasmic translation elongation. Required for the ATP-dependent release of deacylated tRNA from the ribosomal E-site during protein biosynthesis. Stimulates the eEF1A-dependent binding of aminoacyl-tRNA to the ribosomal A-site, which has reduced affinity for tRNA as long as the E-site is occupied. Assists translation termination by stimulating the release of nascent protein from the ribosome by release factors. In nutrient-replete conditions, occupies the space on the ribosome bound by GCN1 during amino acid starvation conditions, and therefore indirectly negatively regulates GCN2 kinase activity in replete conditions. This is Elongation factor 3A (YEF3) from Saccharomyces cerevisiae (strain ATCC 204508 / S288c) (Baker's yeast).